Here is a 278-residue protein sequence, read N- to C-terminus: TATA box-binding protein-associated factor RNA polymerase I subunit D (278 aa).

Disordered regions lie at residues 19-71 (LANR…SSFE) and 88-115 (KKRY…RRNP). S23 carries the phosphoserine modification. Composition is skewed to basic residues over residues 43-53 (REKRNPIRKFV) and 88-99 (KKRYKKKKKKRY). A phosphoserine mark is found at S138 and S234.

In terms of assembly, component of the transcription factor SL1/TIF-IB complex, composed of TBP and at least TAF1A, TAF1B, TAF1C and TAF1D. Interacts with UBTF.

It is found in the nucleus. Its function is as follows. Component of the transcription factor SL1/TIF-IB complex, which is involved in the assembly of the PIC (preinitiation complex) during RNA polymerase I-dependent transcription. The rate of PIC formation probably is primarily dependent on the rate of association of SL1/TIF-IB with the rDNA promoter. SL1/TIF-IB is involved in stabilization of nucleolar transcription factor 1/UBTF on rDNA. Formation of SL1/TIF-IB excludes the association of TBP with TFIID subunits. In Pongo abelii (Sumatran orangutan), this protein is TATA box-binding protein-associated factor RNA polymerase I subunit D (TAF1D).